The chain runs to 298 residues: NADH-cytochrome b5 reductase 2 (298 aa).

A helical membrane pass occupies residues Phe-15 to Ala-38. The 105-residue stretch at Asp-49–Glu-153 folds into the FAD-binding FR-type domain. Residue Gln-156 to Leu-191 participates in FAD binding.

This sequence belongs to the flavoprotein pyridine nucleotide cytochrome reductase family. FAD serves as cofactor.

The protein localises to the mitochondrion outer membrane. It carries out the reaction 2 Fe(III)-[cytochrome b5] + NADH = 2 Fe(II)-[cytochrome b5] + NAD(+) + H(+). Its function is as follows. May mediate the reduction of outer membrane cytochrome b5. The protein is NADH-cytochrome b5 reductase 2 (MCR1) of Scheffersomyces stipitis (strain ATCC 58785 / CBS 6054 / NBRC 10063 / NRRL Y-11545) (Yeast).